The sequence spans 422 residues: MDYSRLLKRSVSAALTAAALLCSTAAFAGEVTIWCWDPNFNVAIMKEAAERYTAKHPDTTFNIVDFAKADVEQKLQTGLASGMTDTLPDIVLIEDYGAQKYLQSFPGSFAALTDKIDFSGFAKYKVDLMTLEGQVYGVPFDSGVTGLYYRTDYLEQAGFKPEDMQNLTWDRFIEIGKEVKAKTGHEMMALDANDGGLIRIMMQSGGQWYFNEDGSLNITGNAALKAALETQARIVNERVAKPTSGSNDGIRALTSGDVASVLRGVWITGTVKSQPDQAGKWALTAIPKLNIEGATAASNLGGSSWYVLEASAEKDEAIDFLNEIYAKDLDFYQKILTERGAVGSLLAARTGEAYQKPDDFFGGQTVWQNFADWLVQVPAVNYGIFTNELDTAVTANFPALVKGTPVDEVLKAIEDQAAGQIQ.

The first 28 residues, 1–28 (MDYSRLLKRSVSAALTAAALLCSTAAFA), serve as a signal peptide directing secretion. Positions 246–277 (SNDGIRALTSGDVASVLRGVWITGTVKSQPDQ) are lactose-binding.

The protein belongs to the bacterial solute-binding protein 1 family.

The protein resides in the periplasm. In terms of biological role, part of the binding-protein-dependent transport system for lactose. The polypeptide is Lactose-binding protein (lacE) (Rhizobium radiobacter (Agrobacterium tumefaciens)).